The sequence spans 264 residues: Thymidylate synthase (264 aa).

Arginine 21 lines the dUMP pocket. Histidine 51 lines the (6R)-5,10-methylene-5,6,7,8-tetrahydrofolate pocket. 126–127 is a dUMP binding site; sequence RR. Cysteine 146 serves as the catalytic Nucleophile. DUMP-binding positions include 166 to 169, asparagine 177, and 207 to 209; these read RSAD and HIY. Residue aspartate 169 coordinates (6R)-5,10-methylene-5,6,7,8-tetrahydrofolate. A (6R)-5,10-methylene-5,6,7,8-tetrahydrofolate-binding site is contributed by alanine 263.

It belongs to the thymidylate synthase family. Bacterial-type ThyA subfamily. Homodimer.

It is found in the cytoplasm. The enzyme catalyses dUMP + (6R)-5,10-methylene-5,6,7,8-tetrahydrofolate = 7,8-dihydrofolate + dTMP. It participates in pyrimidine metabolism; dTTP biosynthesis. Functionally, catalyzes the reductive methylation of 2'-deoxyuridine-5'-monophosphate (dUMP) to 2'-deoxythymidine-5'-monophosphate (dTMP) while utilizing 5,10-methylenetetrahydrofolate (mTHF) as the methyl donor and reductant in the reaction, yielding dihydrofolate (DHF) as a by-product. This enzymatic reaction provides an intracellular de novo source of dTMP, an essential precursor for DNA biosynthesis. This chain is Thymidylate synthase, found in Rhizobium meliloti (strain 1021) (Ensifer meliloti).